Here is a 204-residue protein sequence, read N- to C-terminus: MSRYTGPKWRLSRRLGISLSGSGKELARRPYAPGDHGNTGRRPKLSEYATQLREKQKLRFTYGLSERQFHNLFLKAGKIRKGLHGTNFFILLETRLDSVVFRLGLASTRPQARQLVNHGHILVDGKRVTIPSYEVKPGQIISVRERSKKIVPILNSVEASLNNTPFVEFDADKLEGKLTRYPEREELGADINESLIVEYYNRLG.

Residues 22 to 43 (SGKELARRPYAPGDHGNTGRRP) are disordered. The 61-residue stretch at 94-154 (TRLDSVVFRL…ERSKKIVPIL (61 aa)) folds into the S4 RNA-binding domain.

Belongs to the universal ribosomal protein uS4 family. As to quaternary structure, part of the 30S ribosomal subunit. Contacts protein S5. The interaction surface between S4 and S5 is involved in control of translational fidelity.

Functionally, one of the primary rRNA binding proteins, it binds directly to 16S rRNA where it nucleates assembly of the body of the 30S subunit. In terms of biological role, with S5 and S12 plays an important role in translational accuracy. In Oenococcus oeni (strain ATCC BAA-331 / PSU-1), this protein is Small ribosomal subunit protein uS4.